A 353-amino-acid chain; its full sequence is Protein RecA (353 aa).

68–75 (GPESSGKT) lines the ATP pocket.

This sequence belongs to the RecA family.

It is found in the cytoplasm. Can catalyze the hydrolysis of ATP in the presence of single-stranded DNA, the ATP-dependent uptake of single-stranded DNA by duplex DNA, and the ATP-dependent hybridization of homologous single-stranded DNAs. It interacts with LexA causing its activation and leading to its autocatalytic cleavage. The chain is Protein RecA from Roseiflexus castenholzii (strain DSM 13941 / HLO8).